The chain runs to 227 residues: GFP-like non-fluorescent chromoprotein (227 aa).

A cross-link (2-iminomethyl-5-imidazolinone (Glu-Gly)) is located at residues 63 to 65 (EYG). Y64 carries the post-translational modification 2,3-didehydrotyrosine.

The protein belongs to the GFP family. Homotetramer. In terms of processing, contains a chromophore consisting of modified amino acid residues. The chromophore is formed by autocatalytic backbone condensation between Xaa-N and Gly-(N+2), oxidation of Tyr-(N+1) to didehydrotyrosine, and formation of a double bond to the alpha-amino nitrogen of residue Xaa-N. Maturation of the chromophore requires nothing other than molecular oxygen. The precise stereochemistry of the tyrosine has not been determined.

In terms of biological role, non-fluorescent pigment protein that is lilac in color. This chain is GFP-like non-fluorescent chromoprotein, found in Radianthus crispa (Leathery sea anemone).